Consider the following 1447-residue polypeptide: Bud site selection protein 4 (1447 aa).

Residues 1–16 (MHDAESTVDSLLKEID) are compositionally biased toward basic and acidic residues. Disordered regions lie at residues 1 to 37 (MHDA…TPHN) and 57 to 76 (NTRS…KMST). Ser10 is subject to Phosphoserine. 2 stretches are compositionally biased toward polar residues: residues 22-32 (TKSNITQNGSE) and 59-76 (RSNA…KMST). Residues Ser78, Ser81, Ser91, Ser96, and Ser167 each carry the phosphoserine modification. The interval 272 to 316 (NLPSKLLNTSNNSHSDSRSPTASVEDLNISTNLPGADSSQNNPVT) is disordered. A compositionally biased stretch (polar residues) spans 277 to 316 (LLNTSNNSHSDSRSPTASVEDLNISTNLPGADSSQNNPVT). A Phosphothreonine modification is found at Thr365. Ser367 carries the post-translational modification Phosphoserine. The segment at 444 to 588 (HQESEHANEQ…VEENEESEHV (145 aa)) is disordered. The span at 475 to 494 (EFQRNSKDGEEYRIVQHEES) shows a compositional bias: basic and acidic residues. The span at 497–509 (GQRTKSSEENIIN) shows a compositional bias: polar residues. Residue Ser511 is modified to Phosphoserine. The span at 538 to 548 (SSSCEDQSVSE) shows a compositional bias: polar residues. The span at 549-580 (ARNKDSIEEKEVETKDENIETEKDESEYHKVE) shows a compositional bias: basic and acidic residues. Ser616 bears the Phosphoserine mark. A compositionally biased stretch (polar residues) spans 649–664 (NSQFSQQSSITTASTV). The tract at residues 649-672 (NSQFSQQSSITTASTVDSKKDNGS) is disordered. The interval 768-879 (EHENIPLSTH…SLWESSYELK (112 aa)) is interaction with IQG1. 2 positions are modified to phosphoserine: Ser805 and Ser811. Positions 1302-1413 (NIYKEGYLLQ…WYNKLQEVVE (112 aa)) constitute a PH domain.

This sequence belongs to the BUD4 family. Interacts with AXL1, IQG1 and SEC3. Post-translationally, phosphorylated by CDC28.

Its subcellular location is the bud neck. Required for establishment of the axial budding pattern in haploid cells. Cooperates with other bud site selection proteins to recognize a spatial landmark during mitosis and they subsequently become a landmark for downstream polarity establishment factors that coordinate axial budding and cytokinesis. Involved in the septin organization at the bud neck. This chain is Bud site selection protein 4 (BUD4), found in Saccharomyces cerevisiae (strain YJM789) (Baker's yeast).